Consider the following 479-residue polypeptide: NADH oxidase (479 aa).

FAD contacts are provided by residues 8-12, aspartate 33, cysteine 43, valine 80, 111-114, lysine 149, and tyrosine 177; these read GVNHA and ASGA. The active-site Proton acceptor is the histidine 11. The Redox-active role is filled by cysteine 43. Cysteine 43 is modified (cysteine sulfinic acid (-SO2H)). Residues 170–185, aspartate 197, and glycine 264 each bind NAD(+); that span reads VAIVGSGYIGLELAEA. FAD contacts are provided by residues 295–305, leucine 322, alanine 323, and threonine 324; that span reads LNHENVYVIGG. Alanine 353 is a binding site for NAD(+). Phenylalanine 450 is an FAD binding site.

This sequence belongs to the class-III pyridine nucleotide-disulfide oxidoreductase family. Requires FAD as cofactor.

It catalyses the reaction 2 NADH + O2 + 2 H(+) = 2 NAD(+) + 2 H2O. In terms of biological role, catalyzes the four-electron reduction of molecular oxygen to water. The polypeptide is NADH oxidase (nox) (Mycoplasma pneumoniae (strain ATCC 29342 / M129 / Subtype 1) (Mycoplasmoides pneumoniae)).